We begin with the raw amino-acid sequence, 256 residues long: uncharacterized protein (256 aa).

Residues 187 to 223 (MEEEEISEVEDALNVLQRLCAQEEGDNKEAETNNNNY) adopt a coiled-coil conformation.

This is an uncharacterized protein from Ostreid herpesvirus 1 (isolate France) (OsHV-1).